The following is a 510-amino-acid chain: NAD(P)H-quinone oxidoreductase subunit 2 A, chloroplastic (510 aa).

Transmembrane regions (helical) follow at residues 24–44 (LLLF…GLIL), 57–77 (IPWL…ALLF), 99–119 (IFQF…VEYI), 124–144 (MAIT…MFLC), 149–169 (LITI…LSGY), 183–203 (YLLM…WLYG), 227–247 (PGIS…LSPA), 295–315 (WHLL…LIAI), 323–343 (MLAY…IVGD), 354–374 (YMLF…SFGL), 395–415 (ALSL…AGFF), 418–438 (LHLF…IGLL), and 484–504 (MIVC…IIAI).

The protein belongs to the complex I subunit 2 family. In terms of assembly, NDH is composed of at least 16 different subunits, 5 of which are encoded in the nucleus.

It localises to the plastid. The protein resides in the chloroplast thylakoid membrane. It catalyses the reaction a plastoquinone + NADH + (n+1) H(+)(in) = a plastoquinol + NAD(+) + n H(+)(out). The catalysed reaction is a plastoquinone + NADPH + (n+1) H(+)(in) = a plastoquinol + NADP(+) + n H(+)(out). In terms of biological role, NDH shuttles electrons from NAD(P)H:plastoquinone, via FMN and iron-sulfur (Fe-S) centers, to quinones in the photosynthetic chain and possibly in a chloroplast respiratory chain. The immediate electron acceptor for the enzyme in this species is believed to be plastoquinone. Couples the redox reaction to proton translocation, and thus conserves the redox energy in a proton gradient. This chain is NAD(P)H-quinone oxidoreductase subunit 2 A, chloroplastic, found in Vitis vinifera (Grape).